A 454-amino-acid polypeptide reads, in one-letter code: SSMEPEMEQKVKDQHMERCVNLLVDELGVYSTAQEAWERIYHVSALEALHIRNGHIKNPSAQTKERYQEFLRFENDFSNCLAVSALKTKFGPHLLSAQKILNQLKSTLISPFIEKVSRLIDENKERRANLNAEIEEWELEMQDEREDLQYCFEELTEMTQRLGRCVLNDQIKTLIPSAVLSFSHPFHPEFPAQIGQYQRSLCAHLDNLLEDRVLQCLSIPLQRKILDMEKELGLQITEKSCDWQLIYGLDCQSYMSDFQPDLRFRFSLGFTALWHRLEGNLPLHSSPFRTQKLRNGHKKCLPLPPLVHGNHWQMLESLVKSKGSLGTVLLGAMAIRSFNWPIVMILGGLVGSFYMYEYAAWTTAAQERSFKSQYSRLLQQRLRTDVQQTVSGFELQLRQHLAKVRNCWEAQSNETLNDLNVRTAELTKQIQSMEVLQLSLKKFRDKGQLLASRL.

In terms of domain architecture, Dynamin-type G spans 1-111; the sequence is SSMEPEMEQK…NQLKSTLISP (111 aa). At 1-322 the chain is on the cytoplasmic side; that stretch reads SSMEPEMEQK…QMLESLVKSK (322 aa). Residues 30–33 are G5 motif; it reads YSTA. S44 provides a ligand contact to GTP. Positions 112–162 form a coiled coil; the sequence is FIEKVSRLIDENKERRANLNAEIEEWELEMQDEREDLQYCFEELTEMTQRL. A helical membrane pass occupies residues 323-335; that stretch reads GSLGTVLLGAMAI. Topologically, residues 336–338 are mitochondrial intermembrane; the sequence is RSF. The helical transmembrane segment at 339-361 threads the bilayer; sequence NWPIVMILGGLVGSFYMYEYAAW. Residues 362–454 are Cytoplasmic-facing; it reads TTAAQERSFK…DKGQLLASRL (93 aa). A coiled-coil region spans residues 411-434; sequence QSNETLNDLNVRTAELTKQIQSME.

Belongs to the TRAFAC class dynamin-like GTPase superfamily. Dynamin/Fzo/YdjA family. Mitofusin subfamily.

The protein resides in the mitochondrion outer membrane. The catalysed reaction is GTP + H2O = GDP + phosphate + H(+). Essential transmembrane GTPase, which mediates mitochondrial fusion during spermatogenesis. In early spermatocytes, fusion of mitochondria give rise to two organelles named Nebenkern and constitutes an important step in mitochondria morphology, which is balanced between fusion and fission. Essential for fertility. The protein is Transmembrane GTPase fzo (fzo) of Drosophila simulans (Fruit fly).